The following is a 235-amino-acid chain: MNSIQFPLLDRTAKNSVISTTLNDLSNWSRLSSLWPLLYGTSCCFIEFASLIGSRFDFDRYGLVPRSSPRQADLILTAGTVTMKMAPSLVRLYEQMPEPKYVIAMGACTITGGMFSTDSYSTVRGVDKLIPVDVYLPGCPPKPEAIIDAITKLRKKISREIYQDRMKSQRANRCFTTNHKFRVGHSIHTGNYDQRFLSQPPSTSSIPTETETLFTYKNSVSSHELVNSAGFFGTK.

4 residues coordinate [4Fe-4S] cluster: cysteine 43, cysteine 44, cysteine 108, and cysteine 139.

The protein belongs to the complex I 20 kDa subunit family. NDH is composed of at least 16 different subunits, 5 of which are encoded in the nucleus. [4Fe-4S] cluster serves as cofactor.

It is found in the plastid. It localises to the chloroplast thylakoid membrane. It catalyses the reaction a plastoquinone + NADH + (n+1) H(+)(in) = a plastoquinol + NAD(+) + n H(+)(out). The catalysed reaction is a plastoquinone + NADPH + (n+1) H(+)(in) = a plastoquinol + NADP(+) + n H(+)(out). Its function is as follows. NDH shuttles electrons from NAD(P)H:plastoquinone, via FMN and iron-sulfur (Fe-S) centers, to quinones in the photosynthetic chain and possibly in a chloroplast respiratory chain. The immediate electron acceptor for the enzyme in this species is believed to be plastoquinone. Couples the redox reaction to proton translocation, and thus conserves the redox energy in a proton gradient. The chain is NAD(P)H-quinone oxidoreductase subunit K, chloroplastic from Ipomoea purpurea (Common morning glory).